Consider the following 293-residue polypeptide: MSALDNRLFAKMNGIGNEIVVVDLRDQPAPVTPDDARAVAAHLPYDQLMLLQPARLPGTEAFVRIYNNDGSEAGACGNGMRCVARQMFASTDKQGLTFETRAGLLNCWRGPADGLYTVDMGEPKFGWKDIPLAEEFRDTRSIELQIGPIDAPLLHTPSVVSMGNPHAIFWVDDIEAHDLGRFGPLLENHPIFPERANITLAHIVDRDHITMRTWERGAGLTRACGSAACATAVAAARLKRADRVVEMTLPGGQLSIAWRESDNHVLMTGGATFEFEGRFDPALFARSRDKTSA.

Residues asparagine 17, glutamine 47, and asparagine 67 each coordinate substrate. Cysteine 76 functions as the Proton donor in the catalytic mechanism. Residues 77–78 (GN), asparagine 164, asparagine 197, and 215–216 (ER) each bind substrate. Residue cysteine 224 is the Proton acceptor of the active site. Residue 225 to 226 (GS) participates in substrate binding.

The protein belongs to the diaminopimelate epimerase family. Homodimer.

It is found in the cytoplasm. It carries out the reaction (2S,6S)-2,6-diaminopimelate = meso-2,6-diaminopimelate. Its pathway is amino-acid biosynthesis; L-lysine biosynthesis via DAP pathway; DL-2,6-diaminopimelate from LL-2,6-diaminopimelate: step 1/1. Functionally, catalyzes the stereoinversion of LL-2,6-diaminopimelate (L,L-DAP) to meso-diaminopimelate (meso-DAP), a precursor of L-lysine and an essential component of the bacterial peptidoglycan. In Rhodopseudomonas palustris (strain BisB5), this protein is Diaminopimelate epimerase.